We begin with the raw amino-acid sequence, 507 residues long: MKESQVYLERARSRQQHFLYSLIFREYIYGLAYSHNLNRSLFVENVGYDNKYSLLIVKRLITRMYQQNHLIISANDSNKNSFWGYNNNYYSQIISEGFSIVVEIPFFLQLSSSLEEAEIIKYYKNFRSIHSIFPFLEDKFTYLNYVSDIRIPYPIHLEILVQILRYWVKDAPFFHLLRLFLCNWNSFITTKKKKSISTFSKINPRFFLFLYNFYVCEYESIFVFLRNQSSHLPLKSFRVFFERIFFYAKREHLVKLFAKDFLYTLTLTFFKDPNIHYVRYQGKCILASKNAPFLMDKWKHYFIHLWQCFFDVWSQPRTININPLSEHSFKLLGYFSNVRLNRSVVRSQMLQNTFLIEIVIKKIDIIVPILPLIRSLAKAKFCNVLGQPISKPVWADSSDFDIIDRFLRISRNLSHYYKGSSKKKSLYRIKYILRLSCIKTLACKHKSTVRAFLKRSGSEEFLQEFFTEEEEILSLIFPRDSSTLERLSRNRIWYLDILFSNDLVHDE.

Belongs to the intron maturase 2 family. MatK subfamily.

It is found in the plastid. Its subcellular location is the chloroplast. In terms of biological role, usually encoded in the trnK tRNA gene intron. Probably assists in splicing its own and other chloroplast group II introns. This Lens culinaris (Lentil) protein is Maturase K.